The chain runs to 436 residues: Adenosylhomocysteinase (436 aa).

The substrate site is built by Thr62, Asp136, and Glu161. Position 162–164 (162–164) interacts with NAD(+); the sequence is TTT. 2 residues coordinate substrate: Lys191 and Asp195. NAD(+) contacts are provided by residues Asn196, 225–230, Glu248, Asn283, 304–306, and Asn352; these read GFGDVG and IGH.

It belongs to the adenosylhomocysteinase family. NAD(+) serves as cofactor.

The protein localises to the cytoplasm. It catalyses the reaction S-adenosyl-L-homocysteine + H2O = L-homocysteine + adenosine. It functions in the pathway amino-acid biosynthesis; L-homocysteine biosynthesis; L-homocysteine from S-adenosyl-L-homocysteine: step 1/1. May play a key role in the regulation of the intracellular concentration of adenosylhomocysteine. The sequence is that of Adenosylhomocysteinase from Leptospira interrogans serogroup Icterohaemorrhagiae serovar copenhageni (strain Fiocruz L1-130).